Reading from the N-terminus, the 358-residue chain is Protein RecA (358 aa).

78–85 is an ATP binding site; that stretch reads GPESGGKT.

Belongs to the RecA family.

The protein resides in the cytoplasm. In terms of biological role, can catalyze the hydrolysis of ATP in the presence of single-stranded DNA, the ATP-dependent uptake of single-stranded DNA by duplex DNA, and the ATP-dependent hybridization of homologous single-stranded DNAs. It interacts with LexA causing its activation and leading to its autocatalytic cleavage. The polypeptide is Protein RecA (Deinococcus geothermalis (strain DSM 11300 / CIP 105573 / AG-3a)).